The chain runs to 1767 residues: Endo-alpha-N-acetylgalactosaminidase (1767 aa).

The first 39 residues, 1–39 (MNKGLFEKRCKYSIRKFSLGVASVMIGAAFFGTSPVLAD), serve as a signal peptide directing secretion. 2 stretches are compositionally biased toward basic and acidic residues: residues 61–75 (KEND…KVGE) and 84–111 (DGPK…DKPA). Disordered stretches follow at residues 61–124 (KEND…VTPE) and 301–324 (VKTD…GPEV). Positions 112 to 124 (AAKPETPKTVTPE) are enriched in low complexity. Residues 304–324 (DNQEGVKTEDTPAEKETGPEV) are compositionally biased toward basic and acidic residues. Positions 577, 579, 581, 583, and 588 each coordinate Ca(2+). The tract at residues 602–893 (GWEKVKDITA…DVMTKYFQHF (292 aa)) is catalytic. Substrate is bound at residue Asp-658. The Nucleophile role is filled by Asp-764. The active-site Proton donor/acceptor is Glu-796. Positions 1233, 1235, 1281, 1284, and 1411 each coordinate Ca(2+). The interval 1711–1730 (LASEQGKTPDYKQEIARPET) is disordered. Residues 1717-1730 (KTPDYKQEIARPET) show a composition bias toward basic and acidic residues. Residues 1735–1739 (LPATG) carry the LPXTG sorting signal motif. Thr-1738 carries the post-translational modification Pentaglycyl murein peptidoglycan amidated threonine. Positions 1739 to 1767 (GESQSDTALILASVSLALSALFVVKTKKD) are cleaved as a propeptide — removed by sortase.

The protein belongs to the glycosyl hydrolase 101 family. A subfamily.

The protein resides in the secreted. The protein localises to the cell wall. It catalyses the reaction a 3-O-[beta-D-galactosyl-(1-&gt;3)-N-acetyl-alpha-D-galactosaminyl]-L-threonyl-[protein] + H2O = beta-D-galactosyl-(1-&gt;3)-N-acetyl-D-galactosamine + L-threonyl-[protein]. The enzyme catalyses a 3-O-[beta-D-galactosyl-(1-&gt;3)-N-acetyl-alpha-D-galactosaminyl]-L-seryl-[protein] + H2O = beta-D-galactosyl-(1-&gt;3)-N-acetyl-D-galactosamine + L-seryl-[protein]. In terms of biological role, involved in the breakdown of mucin-type O-linked glycans. Specifically removes the T-antigen disaccharide (Gal-beta-1,3-GalNAc-alpha) from extracellular host glycoproteins. Representative of a broadly important class of virulence factors. The polypeptide is Endo-alpha-N-acetylgalactosaminidase (Streptococcus pneumoniae serotype 4 (strain ATCC BAA-334 / TIGR4)).